Reading from the N-terminus, the 77-residue chain is Large ribosomal subunit protein uL24 (77 aa).

It belongs to the universal ribosomal protein uL24 family. In terms of assembly, part of the 50S ribosomal subunit.

Its function is as follows. One of two assembly initiator proteins, it binds directly to the 5'-end of the 23S rRNA, where it nucleates assembly of the 50S subunit. Functionally, one of the proteins that surrounds the polypeptide exit tunnel on the outside of the subunit. The sequence is that of Large ribosomal subunit protein uL24 from Campylobacter jejuni subsp. jejuni serotype O:6 (strain 81116 / NCTC 11828).